We begin with the raw amino-acid sequence, 120 residues long: NAD(P)H-quinone oxidoreductase subunit 3, chloroplastic (120 aa).

3 helical membrane-spanning segments follow: residues Ile-9 to Gly-29, Met-64 to Met-84, and Val-88 to Leu-108.

It belongs to the complex I subunit 3 family. As to quaternary structure, NDH is composed of at least 16 different subunits, 5 of which are encoded in the nucleus.

Its subcellular location is the plastid. It localises to the chloroplast thylakoid membrane. It catalyses the reaction a plastoquinone + NADH + (n+1) H(+)(in) = a plastoquinol + NAD(+) + n H(+)(out). It carries out the reaction a plastoquinone + NADPH + (n+1) H(+)(in) = a plastoquinol + NADP(+) + n H(+)(out). Its function is as follows. NDH shuttles electrons from NAD(P)H:plastoquinone, via FMN and iron-sulfur (Fe-S) centers, to quinones in the photosynthetic chain and possibly in a chloroplast respiratory chain. The immediate electron acceptor for the enzyme in this species is believed to be plastoquinone. Couples the redox reaction to proton translocation, and thus conserves the redox energy in a proton gradient. The chain is NAD(P)H-quinone oxidoreductase subunit 3, chloroplastic from Cucumis sativus (Cucumber).